The following is a 612-amino-acid chain: Cytoplasmic dynein 1 intermediate chain 2 (612 aa).

Basic and acidic residues-rich tracts occupy residues 1–13 (MSDK…ELER) and 20–43 (QIRE…KKEA). Positions 1–188 (MSDKSDLKAE…PHELTEEEKQ (188 aa)) are disordered. S2 carries the N-acetylserine modification. Position 51 is a diphosphoserine (S51). Phosphoserine is present on residues S51 and S84. Positions 82 to 91 (PSSKSVSTPS) are enriched in low complexity. Position 89 is a phosphothreonine (T89). 3 positions are modified to phosphoserine: S91, S95, and S98. A compositionally biased stretch (basic and acidic residues) spans 164–188 (EKTLKKDEENDSKAPPHELTEEEKQ). 7 WD repeats span residues 251 to 300 (SKHR…TTPE), 304 to 344 (HCQS…RTPV), 353 to 394 (AHTH…HPQD), 403 to 443 (SKAV…AGIS), 448 to 493 (GHQG…PLYS), 496 to 536 (DNSD…EVPT), and 542 to 581 (EGNP…AVPR).

It belongs to the dynein intermediate chain family. Homodimer. The cytoplasmic dynein 1 complex consists of two catalytic heavy chains (HCs) and a number of non-catalytic subunits presented by intermediate chains (ICs), light intermediate chains (LICs) and light chains (LCs); the composition seems to vary in respect to the IC, LIC and LC composition. The heavy chain homodimer serves as a scaffold for the probable homodimeric assembly of the respective non-catalytic subunits. The ICs and LICs bind directly to the HC dimer and the LCs assemble on the IC dimer. Interacts with DYNLT3. Interacts with DYNLT1. Interacts (dephosphorylated at Ser-84) with DCTN1. Interacts with BICD2. Interacts with SPEF2. Interacts with CFAP61. Post-translationally, the phosphorylation status of Ser-84 appears to be involved in dynactin-dependent target binding. Pyrophosphorylation by 5-diphosphoinositol pentakisphosphate (5-IP7) promotes interaction with DCTN1. Serine pyrophosphorylation is achieved by Mg(2+)-dependent, but enzyme independent transfer of a beta-phosphate from a inositol pyrophosphate to a pre-phosphorylated serine residue.

Its subcellular location is the cytoplasm. It is found in the cytoskeleton. Its function is as follows. Acts as one of several non-catalytic accessory components of the cytoplasmic dynein 1 complex that are thought to be involved in linking dynein to cargos and to adapter proteins that regulate dynein function. Cytoplasmic dynein 1 acts as a motor for the intracellular retrograde motility of vesicles and organelles along microtubules. The intermediate chains mediate the binding of dynein to dynactin via its 150 kDa component (p150-glued) DCTN1. Involved in membrane-transport, such as Golgi apparatus, late endosomes and lysosomes. The polypeptide is Cytoplasmic dynein 1 intermediate chain 2 (Dync1i2) (Mus musculus (Mouse)).